A 524-amino-acid polypeptide reads, in one-letter code: Na(+)/H(+) antiporter NhaB (524 aa).

The next 12 helical transmembrane spans lie at 23-43 (IAILAFLIINPLVFSLSPFYA), 44-64 (GWLLVIEFIFTLAMALKCYPL), 97-117 (LLLIFMVAGIYFMKQLLLFVF), 120-140 (LLLNIRSKIVLSLAFCLAAAF), 144-164 (FLDALTVIAVVISVAVGFYGI), 203-223 (LLMHAGVGTALGGVMTMVGEP), 236-256 (FVSFLLRMAPVTVPVFCCGIL), 304-324 (ALVGVWLVSALAFHLAEVGLI), 354-374 (FTALLTVFFSIVAVIIDQHLF), 392-412 (LFYLFNGLLSSISDNVFVGTV), 448-468 (ATPNGQAAFLFLLTSALAPLI), and 476-496 (VWMALPYTVVMTLVGLLCVIF).

The protein belongs to the NhaB Na(+)/H(+) (TC 2.A.34) antiporter family.

It localises to the cell inner membrane. The catalysed reaction is 2 Na(+)(in) + 3 H(+)(out) = 2 Na(+)(out) + 3 H(+)(in). Functionally, na(+)/H(+) antiporter that extrudes sodium in exchange for external protons. The polypeptide is Na(+)/H(+) antiporter NhaB (Edwardsiella ictaluri (strain 93-146)).